The chain runs to 245 residues: 1-(5-phosphoribosyl)-5-[(5-phosphoribosylamino)methylideneamino] imidazole-4-carboxamide isomerase (245 aa).

The Proton acceptor role is filled by Asp-7. The active-site Proton donor is the Asp-129.

It belongs to the HisA/HisF family.

The protein localises to the cytoplasm. The enzyme catalyses 1-(5-phospho-beta-D-ribosyl)-5-[(5-phospho-beta-D-ribosylamino)methylideneamino]imidazole-4-carboxamide = 5-[(5-phospho-1-deoxy-D-ribulos-1-ylimino)methylamino]-1-(5-phospho-beta-D-ribosyl)imidazole-4-carboxamide. The protein operates within amino-acid biosynthesis; L-histidine biosynthesis; L-histidine from 5-phospho-alpha-D-ribose 1-diphosphate: step 4/9. In Shigella flexneri serotype 5b (strain 8401), this protein is 1-(5-phosphoribosyl)-5-[(5-phosphoribosylamino)methylideneamino] imidazole-4-carboxamide isomerase.